Here is a 166-residue protein sequence, read N- to C-terminus: NAD(P)H-quinone oxidoreductase subunit I, chloroplastic (166 aa).

2 consecutive 4Fe-4S ferredoxin-type domains span residues 55–84 (GRIH…VDWK) and 95–124 (LNYS…MTEE). The [4Fe-4S] cluster site is built by cysteine 64, cysteine 67, cysteine 70, cysteine 74, cysteine 104, cysteine 107, cysteine 110, and cysteine 114.

The protein belongs to the complex I 23 kDa subunit family. In terms of assembly, NDH is composed of at least 16 different subunits, 5 of which are encoded in the nucleus. [4Fe-4S] cluster is required as a cofactor.

It localises to the plastid. It is found in the chloroplast thylakoid membrane. The catalysed reaction is a plastoquinone + NADH + (n+1) H(+)(in) = a plastoquinol + NAD(+) + n H(+)(out). It catalyses the reaction a plastoquinone + NADPH + (n+1) H(+)(in) = a plastoquinol + NADP(+) + n H(+)(out). Its function is as follows. NDH shuttles electrons from NAD(P)H:plastoquinone, via FMN and iron-sulfur (Fe-S) centers, to quinones in the photosynthetic chain and possibly in a chloroplast respiratory chain. The immediate electron acceptor for the enzyme in this species is believed to be plastoquinone. Couples the redox reaction to proton translocation, and thus conserves the redox energy in a proton gradient. The protein is NAD(P)H-quinone oxidoreductase subunit I, chloroplastic of Bahiopsis tomentosa (Tecote).